Reading from the N-terminus, the 334-residue chain is Delta(1)-pyrroline-2-carboxylate/Delta(1)-piperideine-2-carboxylate reductase (334 aa).

The active-site Charge relay system is the S44. The active-site Proton donor is H45. Substrate is bound at residue R49. 117–121 provides a ligand contact to NADP(+); the sequence is HFSAL. T157 serves as a coordination point for substrate. 175-177 provides a ligand contact to NADP(+); it reads DFA. Residue 183–184 participates in substrate binding; it reads RG. E185 functions as the Charge relay system in the catalytic mechanism. NADP(+) contacts are provided by residues 226 to 227 and 301 to 307; these read HK and RLPSQRR.

Belongs to the LDH2/MDH2 oxidoreductase family. In terms of assembly, homodimer.

The catalysed reaction is L-pipecolate + NADP(+) = Delta(1)-piperideine-2-carboxylate + NADPH + H(+). It catalyses the reaction L-proline + NADP(+) = 1-pyrroline-2-carboxylate + NADPH + H(+). The enzyme catalyses cis-4-hydroxy-L-proline + NADP(+) = Delta(1)-pyrroline-(4S)-hydroxy-2-carboxylate + NADPH + 2 H(+). In terms of biological role, catalyzes the reduction of both Delta(1)-pyrroline-2-carboxylate (Pyr2C) and Delta(1)-piperideine-2-carboxylate (Pip2C) to L-proline and L-pipecolate, respectively, using NADPH as the electron donor. Cannot use NADH instead of NADPH. Is likely involved in a degradation pathway that converts trans-3-hydroxy-L-proline (t3LHyp) to L-proline, which would allow P.aeruginosa to grow on t3LHyp as a sole carbon source. Can also catalyze the reverse oxidation reactions, albeit at a much lower rate. Is also able to use Delta(1)-pyrroline-(4S)-hydroxy-2-carboxylate (Pyr4SH2C) and cis-4-hydroxy-L-proline (c4LHyp) as substrates, and might be involved in the metabolism of c4LHyp, a compound which is generated by the hydroxylation of free L-proline in bacteria. The polypeptide is Delta(1)-pyrroline-2-carboxylate/Delta(1)-piperideine-2-carboxylate reductase (Pseudomonas aeruginosa (strain ATCC 15692 / DSM 22644 / CIP 104116 / JCM 14847 / LMG 12228 / 1C / PRS 101 / PAO1)).